The primary structure comprises 347 residues: MLVSWDHPKMLPRLLGFLALSLLACGNPTIVSRKEWGASSLTCRVPLSLPVPYLIIEQVTRMQCQDQITCSQVVRVLQSQYVHNKGWCDIAFNFLVGDDGKVYEGVGWYVQGLHTQGYNNVSLGIAFFGSKIGSPSPAALSATEDLIFFAIQNGYLSPKYIQPFLLKEETCLVPQHSEIPKKACPNITPRSAWEARETHCPQMNLPAKFVIIIHTAGKSCNESADCLVRVRDTQSFHIDNQDFCDIAYHFLVGQDGEVYEGVGWNIEGSHTYGYNDIALGIAFMGNFVEKPPNEASLKAAQSLIQCAVAKGYLTSNYLLMGHSDVSNILSPGQALYNIIKTWPHFKH.

The signal sequence occupies residues 1–26 (MLVSWDHPKMLPRLLGFLALSLLACG). 2 consecutive N-acetylmuramoyl-L-alanine amidase domains span residues 77–185 (LQSQ…KACP) and 206–328 (PAKF…VSNI). N120 carries an N-linked (GlcNAc...) asparagine glycan. 3 cysteine pairs are disulfide-bonded: C184–C306, C200–C244, and C220–C226. 2 residues coordinate peptidoglycan: H237 and Y248. Residues 270-275 (HTYGYN) form an interaction with murein region.

This sequence belongs to the N-acetylmuramoyl-L-alanine amidase 2 family. In terms of assembly, monomer. Homodimer; disulfide-linked. Heterodimer with PGLYRP4; disulfide-linked. As to expression, detected in lung, spleen and stomach, and at low levels in eye, heart, thymus and testis.

It is found in the secreted. Pattern receptor that binds to murein peptidoglycans (PGN) of Gram-positive bacteria. Has bactericidal activity towards Gram-positive bacteria. May kill Gram-positive bacteria by interfering with peptidoglycan biosynthesis. Also binds to Gram-negative bacteria, and has bacteriostatic activity towards Gram-negative bacteria. Plays a role in innate immunity. The chain is Peptidoglycan recognition protein 3 (Pglyrp3) from Mus musculus (Mouse).